We begin with the raw amino-acid sequence, 455 residues long: UDP-N-acetylmuramoylalanine--D-glutamate ligase (455 aa).

117 to 123 (GTNGKTT) contributes to the ATP binding site.

Belongs to the MurCDEF family.

Its subcellular location is the cytoplasm. It catalyses the reaction UDP-N-acetyl-alpha-D-muramoyl-L-alanine + D-glutamate + ATP = UDP-N-acetyl-alpha-D-muramoyl-L-alanyl-D-glutamate + ADP + phosphate + H(+). It functions in the pathway cell wall biogenesis; peptidoglycan biosynthesis. Functionally, cell wall formation. Catalyzes the addition of glutamate to the nucleotide precursor UDP-N-acetylmuramoyl-L-alanine (UMA). In Alkaliphilus metalliredigens (strain QYMF), this protein is UDP-N-acetylmuramoylalanine--D-glutamate ligase.